Consider the following 1474-residue polypeptide: Alpha-2-macroglobulin (1474 aa).

The N-terminal stretch at 1 to 23 is a signal peptide; that stretch reads MGKNKLLHPSLVLLLLVLLPTDA. The cysteines at positions 48 and 86 are disulfide-linked. N-linked (GlcNAc...) asparagine glycans are attached at residues Asn55, Asn70, and Asn247. Intrachain disulfides connect Cys251–Cys299 and Cys269–Cys287. N-linked (GlcNAc...) asparagine glycosylation is found at Asn396 and Asn410. 8 disulfides stabilise this stretch: Cys470-Cys563, Cys595-Cys771, Cys642-Cys689, Cys821-Cys849, Cys847-Cys883, Cys921-Cys1321, Cys1079-Cys1127, and Cys1352-Cys1467. The tract at residues 690 to 728 is bait region; that stretch reads PQLQQYEMHGPEGLRVGFYESDVMGRGHARLVHAEEPPT. Isoglutamyl lysine isopeptide (Gln-Lys) (interchain with K-? in other proteins) cross-links involve residues Gln693 and Gln694. Inhibitory regions lie at residues 704 to 709, 719 to 723, and 730 to 735; these read RVGFYE, RLVHA, and TVRKYF. An N-linked (GlcNAc...) asparagine glycan is attached at Asn869. Residues 972 to 975 constitute a cross-link (isoglutamyl cysteine thioester (Cys-Gln)); that stretch reads CGEQ. A glycan (N-linked (GlcNAc...) asparagine) is linked at Asn991. Residue Asn1424 is glycosylated (N-linked (GlcNAc...) asparagine).

It belongs to the protease inhibitor I39 (alpha-2-macroglobulin) family. In terms of assembly, homotetramer; disulfide-linked. Plasma.

The protein resides in the secreted. Functionally, is able to inhibit all four classes of proteinases by a unique 'trapping' mechanism. This protein has a peptide stretch, called the 'bait region' which contains specific cleavage sites for different proteinases. When a proteinase cleaves the bait region, a conformational change is induced in the protein which traps the proteinase. The entrapped enzyme remains active against low molecular weight substrates (activity against high molecular weight substrates is greatly reduced). Following cleavage in the bait region a thioester bond is hydrolyzed and mediates the covalent binding of the protein to the proteinase. The chain is Alpha-2-macroglobulin (A2M) from Pongo abelii (Sumatran orangutan).